Consider the following 270-residue polypeptide: Indole-3-glycerol phosphate synthase (270 aa).

Belongs to the TrpC family.

The catalysed reaction is 1-(2-carboxyphenylamino)-1-deoxy-D-ribulose 5-phosphate + H(+) = (1S,2R)-1-C-(indol-3-yl)glycerol 3-phosphate + CO2 + H2O. It participates in amino-acid biosynthesis; L-tryptophan biosynthesis; L-tryptophan from chorismate: step 4/5. The polypeptide is Indole-3-glycerol phosphate synthase (Salinibacter ruber (strain DSM 13855 / M31)).